The following is a 130-amino-acid chain: Small ribosomal subunit protein uS9 (130 aa).

Belongs to the universal ribosomal protein uS9 family.

The chain is Small ribosomal subunit protein uS9 from Stenotrophomonas maltophilia (strain R551-3).